The chain runs to 448 residues: Oxysterol-binding protein homolog 6 (448 aa).

The disordered stretch occupies residues 1–42 (MGSKKLTVGSDSHRLSKSSFSSNKSSHSATKDQPIDTDDIDE). Residue Ser16 is modified to Phosphoserine. Residues 17–28 (KSSFSSNKSSHS) are compositionally biased toward low complexity. The segment at 54-391 (IISQLRPGCD…PGEDLDYCIY (338 aa)) is OSBP-related domain (ORD). A 1,2-diacyl-sn-glycero-3-phospho-(1D-myo-inositol 4-phosphate)-binding positions include 64–69 (LTRITL), 126–129 (KPLN), and 157–158 (HH). A 1,2-diacyl-sn-glycero-3-phospho-L-serine is bound by residues 64-69 (LTRITL) and Asn129. A 1,2-diacyl-sn-glycero-3-phospho-L-serine is bound at residue Ser183. A 1,2-diacyl-sn-glycero-3-phospho-(1D-myo-inositol 4-phosphate) contacts are provided by Lys351, Glu355, and Arg359.

It belongs to the OSBP family. As to quaternary structure, interacts with the AAA ATPase VPS4; regulates OSH6 membrane association. VPS4 is required for membrane dissociation of OSH6.

It is found in the cytoplasm. It localises to the cell membrane. Its subcellular location is the endoplasmic reticulum membrane. The enzyme catalyses a 1,2-diacyl-sn-glycero-3-phospho-L-serine(in) = a 1,2-diacyl-sn-glycero-3-phospho-L-serine(out). Its function is as follows. Lipid transport protein (LTP) involved in non-vesicular transfer of lipids between membranes. Functions in phosphoinositide-coupled directional transport of various lipids by carrying the lipid molecule in a hydrophobic pocket and transferring it between membranes through the cytosol. Involved in maintenance of intracellular sterol distribution and homeostasis. Catalyzes the lipid countertransport between the endoplasmic reticulum (ER) and the plasma membrane (PM). Specifically exchanges phosphatidylserine (PS) with phosphatidylinositol 4-phosphate (PI4P), delivering phosphatidylserine to the PM in exchange for PI4P, which is delivered to the ER-localized PI4P phosphatase SAC1 for degradation. Thus, by maintaining a PI4P gradient at the ER/PM interface, SAC1 drives PS transport. Binds phosphatidylserine and PI4P in a mutually exclusive manner. Also binds phosphatidic acid (PA). The chain is Oxysterol-binding protein homolog 6 from Saccharomyces cerevisiae (strain ATCC 204508 / S288c) (Baker's yeast).